The chain runs to 108 residues: Nitrite reductase (NADH) small subunit (108 aa).

The protein to B.subtilis NasE. Associates with NirB.

It is found in the cytoplasm. It catalyses the reaction NH4(+) + 3 NAD(+) + 2 H2O = nitrite + 3 NADH + 5 H(+). Functionally, required for activity of the reductase. This Escherichia coli O157:H7 protein is Nitrite reductase (NADH) small subunit (nirD).